The chain runs to 216 residues: Uracil phosphoribosyltransferase (216 aa).

30-34 (KNLVK) lines the GTP pocket. Residues R80, R105, and 140 to 148 (DPMIATGST) contribute to the 5-phospho-alpha-D-ribose 1-diphosphate site. Uracil-binding positions include I203 and 208 to 210 (GDA). D209 serves as a coordination point for 5-phospho-alpha-D-ribose 1-diphosphate.

This sequence belongs to the UPRTase family. Requires Mg(2+) as cofactor.

It carries out the reaction UMP + diphosphate = 5-phospho-alpha-D-ribose 1-diphosphate + uracil. It participates in pyrimidine metabolism; UMP biosynthesis via salvage pathway; UMP from uracil: step 1/1. With respect to regulation, allosterically activated by GTP. Its function is as follows. Catalyzes the conversion of uracil and 5-phospho-alpha-D-ribose 1-diphosphate (PRPP) to UMP and diphosphate. In Sulfolobus acidocaldarius (strain ATCC 33909 / DSM 639 / JCM 8929 / NBRC 15157 / NCIMB 11770), this protein is Uracil phosphoribosyltransferase.